The sequence spans 393 residues: S-adenosylmethionine synthase 3 (393 aa).

Residue glutamate 43 participates in K(+) binding. Positions 56 and 99 each coordinate L-methionine. ATP is bound by residues 167 to 169, 235 to 238, aspartate 246, 252 to 253, alanine 269, lysine 273, and lysine 277; these read DGK, SGRF, and RK. An L-methionine-binding site is contributed by aspartate 246. Lysine 277 serves as a coordination point for L-methionine.

This sequence belongs to the AdoMet synthase family. As to quaternary structure, homotetramer. It depends on Mn(2+) as a cofactor. Mg(2+) serves as cofactor. Co(2+) is required as a cofactor. Requires K(+) as cofactor.

The protein localises to the cytoplasm. The enzyme catalyses L-methionine + ATP + H2O = S-adenosyl-L-methionine + phosphate + diphosphate. Its pathway is amino-acid biosynthesis; S-adenosyl-L-methionine biosynthesis; S-adenosyl-L-methionine from L-methionine: step 1/1. Functionally, catalyzes the formation of S-adenosylmethionine from methionine and ATP. The reaction comprises two steps that are both catalyzed by the same enzyme: formation of S-adenosylmethionine (AdoMet) and triphosphate, and subsequent hydrolysis of the triphosphate. The protein is S-adenosylmethionine synthase 3 (SAM3) of Actinidia chinensis var. chinensis (Chinese soft-hair kiwi).